The sequence spans 194 residues: Myelin-associated neurite-outgrowth inhibitor (194 aa).

The residue at position 1 (methionine 1) is an N-acetylmethionine. The Cytoplasmic segment spans residues methionine 1–lysine 18. Serine 6 bears the Phosphoserine mark. Residues glycine 19–tyrosine 41 form a helical membrane-spanning segment. The Extracellular segment spans residues proline 42–serine 141. Asparagine 45 carries N-linked (GlcNAc...) asparagine glycosylation. A helical membrane pass occupies residues glycine 142 to alanine 163. Residues histidine 164–tryptophan 194 lie on the Cytoplasmic side of the membrane.

It belongs to the FAM168 family. In terms of assembly, may form homodimers. May interact with DAZAP2, FAM168A, PRDX6, RBM6, TMTC1 and YPEL2. Interacts with CDC27. In terms of processing, N-glycosylated. In terms of tissue distribution, predominantly expressed in the brain, including olfactory bulb, cortex and cerebellum (at protein level).

Its subcellular location is the cytoplasm. It is found in the perinuclear region. The protein resides in the cell membrane. It localises to the cell projection. The protein localises to the axon. In terms of biological role, inhibitor of neuronal axonal outgrowth. Acts as a negative regulator of CDC42 and STAT3 and a positive regulator of STMN2. Positive regulator of CDC27. In Mus musculus (Mouse), this protein is Myelin-associated neurite-outgrowth inhibitor (Fam168b).